Here is a 424-residue protein sequence, read N- to C-terminus: UPF0415 protein C7orf25 homolog (424 aa).

It belongs to the UPF0415 family.

This is UPF0415 protein C7orf25 homolog from Xenopus tropicalis (Western clawed frog).